A 307-amino-acid polypeptide reads, in one-letter code: Ribonuclease Z (307 aa).

7 residues coordinate Zn(2+): His-64, His-66, Asp-68, His-69, His-141, Asp-209, and His-267. Asp-68 (proton acceptor) is an active-site residue.

The protein belongs to the RNase Z family. As to quaternary structure, homodimer. The cofactor is Zn(2+).

The catalysed reaction is Endonucleolytic cleavage of RNA, removing extra 3' nucleotides from tRNA precursor, generating 3' termini of tRNAs. A 3'-hydroxy group is left at the tRNA terminus and a 5'-phosphoryl group is left at the trailer molecule.. In terms of biological role, zinc phosphodiesterase, which displays some tRNA 3'-processing endonuclease activity. Probably involved in tRNA maturation, by removing a 3'-trailer from precursor tRNA. In Thermoplasma acidophilum (strain ATCC 25905 / DSM 1728 / JCM 9062 / NBRC 15155 / AMRC-C165), this protein is Ribonuclease Z.